A 498-amino-acid polypeptide reads, in one-letter code: MRINPTTSDPEVSIREKKNLGRIAQIIGPVLDVAFPPGKMPNIYNALVVKGRDTLGQEINVTCEVQQLLGNNRVRAVAMSATEGLKRGMDVVDMGKPLSVPVGGATLGRIFNVLGEPVDNLGPVDTRTTSPIHKSAPAFIQLDTKLSIFETGIKVVDLLAPYRRGGKIGLFGGAGVGKTVLIMELINNIAKAHGGVSVFGGVGERTREGNDLYMEMKESGVINEQNLAESKVALVYGQMNEPPGARMRVGLTALTMAEYFRDVNEQDVLLFIDNIFRFVQAGSEVSALLGRMPSAVGYQPTLSTEMGTLQERITSTKKGSITSIQAVYVPADDLTDPAPATTFAHLDATTVLSRGLAAKGIYPAVDPLDSTSTMLQPRIVGEEHYDTAQQVKQTLQRYKELQDIIAILGLDELSEEDRLTVARARKIERFLSQPFFVAEVFTGSPGKYVGLAETIRGFKLILSGEFDSLPEQAFYLVGNIDEATAKATNLEMESKLKK.

Position 6 is a phosphothreonine (threonine 6). Serine 13 carries the phosphoserine modification. 172–179 (GGAGVGKT) lines the ATP pocket.

The protein belongs to the ATPase alpha/beta chains family. F-type ATPases have 2 components, CF(1) - the catalytic core - and CF(0) - the membrane proton channel. CF(1) has five subunits: alpha(3), beta(3), gamma(1), delta(1), epsilon(1). CF(0) has four main subunits: a(1), b(1), b'(1) and c(9-12).

The protein resides in the plastid. It localises to the chloroplast thylakoid membrane. The catalysed reaction is ATP + H2O + 4 H(+)(in) = ADP + phosphate + 5 H(+)(out). Produces ATP from ADP in the presence of a proton gradient across the membrane. The catalytic sites are hosted primarily by the beta subunits. This chain is ATP synthase subunit beta, chloroplastic, found in Capsella bursa-pastoris (Shepherd's purse).